A 230-amino-acid polypeptide reads, in one-letter code: 2,3-bisphosphoglycerate-dependent phosphoglycerate mutase (230 aa).

Substrate contacts are provided by residues 8-15 (RHGESEWN), 21-22 (TG), R60, 87-90 (ERHY), K98, 114-115 (RR), and 183-184 (GN). The active-site Tele-phosphohistidine intermediate is H9. E87 functions as the Proton donor/acceptor in the catalytic mechanism.

This sequence belongs to the phosphoglycerate mutase family. BPG-dependent PGAM subfamily.

The enzyme catalyses (2R)-2-phosphoglycerate = (2R)-3-phosphoglycerate. Its pathway is carbohydrate degradation; glycolysis; pyruvate from D-glyceraldehyde 3-phosphate: step 3/5. Functionally, catalyzes the interconversion of 2-phosphoglycerate and 3-phosphoglycerate. This chain is 2,3-bisphosphoglycerate-dependent phosphoglycerate mutase, found in Streptococcus thermophilus (strain CNRZ 1066).